We begin with the raw amino-acid sequence, 101 residues long: Citrinin resistance protein, mitochondrial (101 aa).

The protein resides in the mitochondrion. Its function is as follows. Mitochondrial protein that is involved in citrinin resistance. In Saccharomyces cerevisiae (strain ATCC 204508 / S288c) (Baker's yeast), this protein is Citrinin resistance protein, mitochondrial.